Reading from the N-terminus, the 184-residue chain is Nucleoside triphosphate pyrophosphatase (184 aa).

Aspartate 71 serves as the catalytic Proton acceptor.

It belongs to the Maf family. It depends on a divalent metal cation as a cofactor.

The protein resides in the cytoplasm. The catalysed reaction is a ribonucleoside 5'-triphosphate + H2O = a ribonucleoside 5'-phosphate + diphosphate + H(+). The enzyme catalyses a 2'-deoxyribonucleoside 5'-triphosphate + H2O = a 2'-deoxyribonucleoside 5'-phosphate + diphosphate + H(+). Nucleoside triphosphate pyrophosphatase. May have a dual role in cell division arrest and in preventing the incorporation of modified nucleotides into cellular nucleic acids. The sequence is that of Nucleoside triphosphate pyrophosphatase from Synechococcus sp. (strain CC9605).